Here is a 264-residue protein sequence, read N- to C-terminus: Thymidylate synthase (264 aa).

R21 lines the dUMP pocket. H51 contacts (6R)-5,10-methylene-5,6,7,8-tetrahydrofolate. 126–127 (RR) is a dUMP binding site. The active-site Nucleophile is the C146. DUMP contacts are provided by residues 166–169 (RSCD), N177, and 207–209 (HLY). D169 contacts (6R)-5,10-methylene-5,6,7,8-tetrahydrofolate. Position 263 (A263) interacts with (6R)-5,10-methylene-5,6,7,8-tetrahydrofolate.

Belongs to the thymidylate synthase family. Bacterial-type ThyA subfamily. As to quaternary structure, homodimer.

The protein localises to the cytoplasm. It catalyses the reaction dUMP + (6R)-5,10-methylene-5,6,7,8-tetrahydrofolate = 7,8-dihydrofolate + dTMP. It functions in the pathway pyrimidine metabolism; dTTP biosynthesis. Its function is as follows. Catalyzes the reductive methylation of 2'-deoxyuridine-5'-monophosphate (dUMP) to 2'-deoxythymidine-5'-monophosphate (dTMP) while utilizing 5,10-methylenetetrahydrofolate (mTHF) as the methyl donor and reductant in the reaction, yielding dihydrofolate (DHF) as a by-product. This enzymatic reaction provides an intracellular de novo source of dTMP, an essential precursor for DNA biosynthesis. This chain is Thymidylate synthase, found in Escherichia coli (strain 55989 / EAEC).